A 284-amino-acid polypeptide reads, in one-letter code: MIKPLKKAVLPVAGLGTRFLPATKCVPKEMLTVVDRPLIQYAIDEAREAGIEEFCLVSSRGKDSLIDYFDISYELEDTLKARKKTSALKALEATRVIPGTMLSVPPAGTAGPWHAIWCAREFIGNDPFAILLPDDVVQSKKSCIGQLVEVYNKTGGNVLAVTEVPREQTGSYGILDVGKDDGKTVEVKGLVEKPDPKDAPSTLSVIGRYVLTADVLKHLAKLEKGAGGEVQLTDAMAKTIGHVPFHGYRYEGKRFDCGSKIASWKPRSPLRWSVRNWLPACVNS.

The protein belongs to the UDPGP type 2 family.

It carries out the reaction alpha-D-glucose 1-phosphate + UTP + H(+) = UDP-alpha-D-glucose + diphosphate. This chain is UTP--glucose-1-phosphate uridylyltransferase (celA), found in Komagataeibacter xylinus (Gluconacetobacter xylinus).